The following is a 472-amino-acid chain: Glutamine synthetase (472 aa).

The GS beta-grasp domain maps to 13 to 101 (SKARFVDLRF…TCDVIDPADG (89 aa)). In terms of domain architecture, GS catalytic spans 108-472 (PRSIARRAEA…PLEFEMYYSL (365 aa)). The Mg(2+) site is built by Glu-133 and Glu-135. Glu-211 provides a ligand contact to ATP. Mg(2+) is bound by residues Glu-216 and Glu-224. L-glutamate-binding positions include 268-269 (NG) and Gly-269. His-273 lines the Mg(2+) pocket. ATP-binding positions include 275–277 (HQS) and Ser-277. Residues Arg-325, Glu-331, and Arg-343 each contribute to the L-glutamate site. The ATP site is built by Arg-343, Arg-348, and Lys-356. Glu-361 contacts Mg(2+). Residue Arg-363 coordinates L-glutamate. Tyr-401 carries the O-AMP-tyrosine modification.

The protein belongs to the glutamine synthetase family. In terms of assembly, oligomer of 12 subunits arranged in the form of two hexameric ring. Requires Mg(2+) as cofactor.

The protein localises to the cytoplasm. The enzyme catalyses L-glutamate + NH4(+) + ATP = L-glutamine + ADP + phosphate + H(+). The activity of this enzyme could be controlled by adenylation under conditions of abundant glutamine. Functionally, catalyzes the ATP-dependent biosynthesis of glutamine from glutamate and ammonia. The protein is Glutamine synthetase of Neisseria gonorrhoeae.